Reading from the N-terminus, the 206-residue chain is RILP-like protein 2 (206 aa).

A disordered region spans residues 1–29; it reads MEEPPLREEEEEEEEDEAGPEGALGKSPL. Over residues 8–19 the composition is skewed to acidic residues; the sequence is EEEEEEEEDEAG. An RH1 domain is found at 19–108; that stretch reads GPEGALGKSP…RREGSAAGPE (90 aa). Positions 67 to 159 form a coiled coil; the sequence is LEMLETLVNE…VQEELQCYKS (93 aa). Positions 125 to 197 constitute an RH2 domain; it reads RPRFTLQELR…KEEKTIIRKL (73 aa). The tract at residues 161-189 is disordered; sequence LIPPREGPGGRREKEALFPRGSNANSNKE. Over residues 168-177 the composition is skewed to basic and acidic residues; it reads PGGRREKEAL.

This sequence belongs to the RILPL family. In terms of assembly, homodimer. Interacts with RAC1. Interacts (via N-terminus) with MYO5A, the interaction is required for its role in dendrite formation. Interacts with RAB8A; interaction is dependent on the phosphorylation of RAB8A on 'Thr-72'. Interacts with RAB10 and RAB12; interaction is dependent on the phosphorylation of 'Thr-73' on RAB10 and 'Ser-105' on RAB12.

It localises to the cytoplasm. The protein localises to the cytosol. Its subcellular location is the cytoskeleton. The protein resides in the microtubule organizing center. It is found in the centrosome. It localises to the cell projection. The protein localises to the cilium. Its function is as follows. Involved in cell shape and neuronal morphogenesis, positively regulating the establishment and maintenance of dendritic spines. Plays a role in cellular protein transport, including protein transport away from primary cilia. May function via activation of RAC1 and PAK1. The protein is RILP-like protein 2 (RILPL2) of Bos taurus (Bovine).